The chain runs to 1107 residues: Phospholipid-transporting ATPase 2 (1107 aa).

Topologically, residues 1–33 (MKRFVYINDDEASKELCCDNRISNRKYTLWNFL) are cytoplasmic. A helical transmembrane segment spans residues 34 to 55 (PKNLWEQFSRFMNQYFLLIACL). The Extracellular segment spans residues 56–60 (QLWSL). Residues 61–83 (ITPVNPASTWGPLIFIFAVSASK) form a helical membrane-spanning segment. At 84–268 (EAWDDYHRYL…TAMDAMIDKL (185 aa)) the chain is on the cytoplasmic side. Residues 269–290 (TGAIFVFQIVVVLVLGIAGNVW) form a helical membrane-spanning segment. Over 291 to 315 (KDTEARKQWYVQYPEEAPWYELLVI) the chain is Extracellular. The chain crosses the membrane as a helical span at residues 316 to 333 (PLRFELLCSIMIPISIKV). The Cytoplasmic portion of the chain corresponds to 334 to 807 (SLDLVKGLYA…HGRYSYNRTA (474 aa)). Aspartate 381 serves as the catalytic 4-aspartylphosphate intermediate. Mg(2+) is bound by residues aspartate 752 and aspartate 756. A helical membrane pass occupies residues 808 to 827 (FLSQYSFYKSLLICFIQIFF). Residues 828-841 (SFISGVSGTSLFNS) lie on the Extracellular side of the membrane. The chain crosses the membrane as a helical span at residues 842 to 860 (VSLMAYNVFYTSVPVLVSV). Residues 861–890 (IDKDLSEASVMQHPQILFYCQAGRLLNPST) lie on the Cytoplasmic side of the membrane. Residues 891 to 912 (FAGWFGRSLFHAIIVFVITIHA) form a helical membrane-spanning segment. At 913–919 (YAYEKSE) the chain is on the extracellular side. Residues 920-942 (MEELGMVALSGCIWLQAFVVAQE) traverse the membrane as a helical segment. Residues 943 to 948 (TNSFTV) lie on the Cytoplasmic side of the membrane. A helical membrane pass occupies residues 949 to 969 (LQHLSIWGNLVGFYAINFLFS). Residues 970–982 (AIPSSGMYTIMFR) are Extracellular-facing. A helical membrane pass occupies residues 983 to 1007 (LCSQPSYWITMFLIVGAGMGPIFAL). Over 1008-1107 (KYFRYTYRPS…SGYTRNCKDN (100 aa)) the chain is Cytoplasmic. A disordered region spans residues 1048 to 1075 (DLSPISITQPKNRSPVYEPLLSDSPNAT). Residue serine 1050 is modified to Phosphoserine.

The protein belongs to the cation transport ATPase (P-type) (TC 3.A.3) family. Type IV subfamily. In terms of assembly, interacts with ALIS1, ALIS3 and ALIS5 in a heterologous system.

It is found in the endoplasmic reticulum membrane. The protein resides in the prevacuolar compartment membrane. The enzyme catalyses ATP + H2O + phospholipidSide 1 = ADP + phosphate + phospholipidSide 2.. Its function is as follows. Involved in transport of phospholipids. Contributes to transmembrane flipping of lipids. Requires an interaction with a protein of the ALIS family for activity. Specific for phosphatidylserine and has no activity with lysolipid, phosphatidylcholine or phosphatidylethanolamine. The chain is Phospholipid-transporting ATPase 2 from Arabidopsis thaliana (Mouse-ear cress).